Here is a 281-residue protein sequence, read N- to C-terminus: Hydroxyethylthiazole kinase (281 aa).

Positions 124 and 169 each coordinate ATP.

This sequence belongs to the Thz kinase family. Mg(2+) is required as a cofactor.

The enzyme catalyses 5-(2-hydroxyethyl)-4-methylthiazole + ATP = 4-methyl-5-(2-phosphooxyethyl)-thiazole + ADP + H(+). The protein operates within cofactor biosynthesis; thiamine diphosphate biosynthesis; 4-methyl-5-(2-phosphoethyl)-thiazole from 5-(2-hydroxyethyl)-4-methylthiazole: step 1/1. Its function is as follows. Catalyzes the phosphorylation of the hydroxyl group of 4-methyl-5-beta-hydroxyethylthiazole (THZ). In Rhodococcus erythropolis (strain PR4 / NBRC 100887), this protein is Hydroxyethylthiazole kinase.